The primary structure comprises 154 residues: Crossover junction endodeoxyribonuclease RuvC (154 aa).

Catalysis depends on residues Asp7, Glu67, and Asp139. Mg(2+) is bound by residues Asp7, Glu67, and Asp139.

The protein belongs to the RuvC family. As to quaternary structure, homodimer which binds Holliday junction (HJ) DNA. The HJ becomes 2-fold symmetrical on binding to RuvC with unstacked arms; it has a different conformation from HJ DNA in complex with RuvA. In the full resolvosome a probable DNA-RuvA(4)-RuvB(12)-RuvC(2) complex forms which resolves the HJ. It depends on Mg(2+) as a cofactor.

The protein resides in the cytoplasm. The enzyme catalyses Endonucleolytic cleavage at a junction such as a reciprocal single-stranded crossover between two homologous DNA duplexes (Holliday junction).. In terms of biological role, the RuvA-RuvB-RuvC complex processes Holliday junction (HJ) DNA during genetic recombination and DNA repair. Endonuclease that resolves HJ intermediates. Cleaves cruciform DNA by making single-stranded nicks across the HJ at symmetrical positions within the homologous arms, yielding a 5'-phosphate and a 3'-hydroxyl group; requires a central core of homology in the junction. The consensus cleavage sequence is 5'-(A/T)TT(C/G)-3'. Cleavage occurs on the 3'-side of the TT dinucleotide at the point of strand exchange. HJ branch migration catalyzed by RuvA-RuvB allows RuvC to scan DNA until it finds its consensus sequence, where it cleaves and resolves the cruciform DNA. This Synechococcus sp. (strain WH7803) protein is Crossover junction endodeoxyribonuclease RuvC.